Consider the following 785-residue polypeptide: MKFTFSWLRRYLDTDVSLDVIIKKLSDIGIEVNNVDYCEHLKTFVIAEVLEVNPHHSANKLKICKVSDGKQILQVVCGASNVKVGMKSVLACVGSIMPTDQSIIEVVKLRGVESYGMLCSNDELGIVDHRNSKNGIIELPNTYNVGDTFFPCDPIIEVSITPNRGDCLGVYGIARDLAAAGLGKLKCIGELSNHSNCSSPIEVSVQVDGIVKGRYIKGIKNCESPKWLKDYLLVCGINSISFVVDITNYIMLSFNRPLHVYDANKIKNKLIFKKADNQTEFYALNDKKYILGTENIVAVDLENSIHSVAGVIGSKLSSCLLDTEDIFLESAWFAPVDIVLSSKKIKLSTDSSYRFERFVDPRFLQTGLDLATKMILEYCGGTHFDVVSNEVHVVDNIELNFFPDSVRSIGNVNISNEEIFDFLIKLGFIVDNNNEFLWRVTVPSWRSDIKHSSDIVEEVLRLYGYDKICEEPIPISHVDISDDYHDRLKALLLSEGLMEVITWSFTNMVFAEKLGYSSELLLIDNPISDKLNLMRPSLLLNLLQVVYENQAYGSSEIAIFEIGQVYGFNNICGSNSNVVCGVRYGNNLPRNLYKCDRSVDVFDVKSDVISILQELNIESNSIELRKSDKSYLHPVRSADVYFKDICLGYFGELHPNIVHLYEIKRPVVCFEVFLYKIPKVDVAHKELTESCYQSVKRDFAFLIDKDTSVQHLIDVTKNSNPVLIDNVTVFDLYEGNSIGDNKLSVALSVTFNPVDHTLNDQEIKDASDLIINAVAEKLGGVLRSF.

In terms of domain architecture, tRNA-binding spans 38–150 (CEHLKTFVIA…NTYNVGDTFF (113 aa)). The B5 domain maps to 394–470 (VDNIELNFFP…RLYGYDKICE (77 aa)). Mg(2+) contacts are provided by aspartate 448, aspartate 454, glutamate 457, and glutamate 458. One can recognise an FDX-ACB domain in the interval 690 to 783 (SCYQSVKRDF…VAEKLGGVLR (94 aa)).

This sequence belongs to the phenylalanyl-tRNA synthetase beta subunit family. Type 1 subfamily. In terms of assembly, tetramer of two alpha and two beta subunits. Requires Mg(2+) as cofactor.

It is found in the cytoplasm. The catalysed reaction is tRNA(Phe) + L-phenylalanine + ATP = L-phenylalanyl-tRNA(Phe) + AMP + diphosphate + H(+). This is Phenylalanine--tRNA ligase beta subunit from Ehrlichia canis (strain Jake).